The chain runs to 119 residues: Ribonuclease P protein component (119 aa).

It belongs to the RnpA family. Consists of a catalytic RNA component (M1 or rnpB) and a protein subunit.

The catalysed reaction is Endonucleolytic cleavage of RNA, removing 5'-extranucleotides from tRNA precursor.. RNaseP catalyzes the removal of the 5'-leader sequence from pre-tRNA to produce the mature 5'-terminus. It can also cleave other RNA substrates such as 4.5S RNA. The protein component plays an auxiliary but essential role in vivo by binding to the 5'-leader sequence and broadening the substrate specificity of the ribozyme. The polypeptide is Ribonuclease P protein component (Listeria monocytogenes serotype 4b (strain CLIP80459)).